Consider the following 337-residue polypeptide: 1-aminocyclopropane-1-carboxylate deaminase (337 aa).

K50 is subject to N6-(pyridoxal phosphate)lysine.

It belongs to the ACC deaminase/D-cysteine desulfhydrase family. In terms of assembly, homotrimer. Requires pyridoxal 5'-phosphate as cofactor.

The enzyme catalyses 1-aminocyclopropane-1-carboxylate + H2O = 2-oxobutanoate + NH4(+). Functionally, catalyzes a cyclopropane ring-opening reaction, the irreversible conversion of 1-aminocyclopropane-1-carboxylate (ACC) to ammonia and alpha-ketobutyrate. Allows growth on ACC as a nitrogen source. The protein is 1-aminocyclopropane-1-carboxylate deaminase of Mesorhizobium japonicum (strain LMG 29417 / CECT 9101 / MAFF 303099) (Mesorhizobium loti (strain MAFF 303099)).